The primary structure comprises 88 residues: UPF0335 protein WRi_003770 (88 aa).

Belongs to the UPF0335 family.

The chain is UPF0335 protein WRi_003770 from Wolbachia sp. subsp. Drosophila simulans (strain wRi).